The chain runs to 814 residues: Phenylalanine--tRNA ligase beta subunit (814 aa).

Residues 39–153 (SARAKGVVVG…ELPALGAPVA (115 aa)) enclose the tRNA-binding domain. A B5 domain is found at 414 to 498 (ADASSVLLRR…RLVGFDRFGA (85 aa)). D476, D482, E485, and E486 together coordinate Mg(2+). Residues 720-813 (PTVPASERDL…LVKQHGAELR (94 aa)) enclose the FDX-ACB domain.

It belongs to the phenylalanyl-tRNA synthetase beta subunit family. Type 1 subfamily. As to quaternary structure, tetramer of two alpha and two beta subunits. Mg(2+) is required as a cofactor.

It is found in the cytoplasm. The catalysed reaction is tRNA(Phe) + L-phenylalanine + ATP = L-phenylalanyl-tRNA(Phe) + AMP + diphosphate + H(+). This chain is Phenylalanine--tRNA ligase beta subunit, found in Parasynechococcus marenigrum (strain WH8102).